The primary structure comprises 1162 residues: Reticulon-4 (1162 aa).

Methionine 1 carries the post-translational modification N-acetylmethionine. The interval methionine 1–isoleucine 183 is disordered. The Cytoplasmic segment spans residues methionine 1–glycine 988. Residues serine 7 and serine 16 each carry the phosphoserine modification. Residues serine 7–serine 16 are compositionally biased toward low complexity. The segment covering glutamate 31–glutamate 54 has biased composition (acidic residues). The segment covering proline 85–alanine 99 has biased composition (pro residues). Phosphoserine is present on serine 105. Over residues serine 109–lysine 127 the composition is skewed to low complexity. 5 positions are modified to phosphoserine: serine 145, serine 165, serine 167, serine 329, and serine 344. Position 348 is a phosphothreonine (threonine 348). Basic and acidic residues predominate over residues serine 408–asparagine 422. Residues serine 408–glutamate 432 are disordered. Serine 426 carries the phosphoserine modification. Threonine 430 carries the phosphothreonine modification. Phosphoserine is present on residues serine 489, serine 690, serine 727, serine 768, and serine 832. A disordered region spans residues glutamate 711 to serine 730. Residues valine 713–serine 730 are compositionally biased toward acidic residues. Phosphothreonine is present on threonine 834. Residues serine 857 and serine 961 each carry the phosphoserine modification. The region spanning valine 975 to glutamate 1162 is the Reticulon domain. Residues valine 989–valine 1009 form a helical membrane-spanning segment. Topologically, residues threonine 1010 to arginine 1078 are lumenal. N6-acetyllysine is present on lysine 1074. The chain crosses the membrane as a helical span at residues leucine 1079–threonine 1099. Residues tyrosine 1100 to glutamate 1162 lie on the Cytoplasmic side of the membrane.

Binds to RTN4R. Interacts with ATL1. Interacts with TMEM170A. Interacts with RTN4IP1. As to quaternary structure, interacts in trans with CNTNAP1. Interacts with REEP5. Interacts with GPR50. Interacts with synaptic plasticity regulator PANTS; the interaction results in enhanced RTN4-mediated inhibition of AMPA receptor clustering. In terms of assembly, homodimer. Interacts with BAD/Bcl-xl and BCL2. Interact with RTN3. Interacts with NGBR. Interacts with SPTLC1. Interacts with GRAMD4. Interacts with CDH5. Interacts with BACE1 and BACE2. Interacts with REEP5. Interacts with RETREG3. Interacts with BACE1 and BACE2. Interacts with TMEM33. As to expression, expressed in cardiomyocytes (at protein level). Highly expressed in brain but not deteceted in aorta, femoral and carotid arteries. Main isoform expressed in neurons. In terms of tissue distribution, expressed in cardiomyocytes (at protein level). Expressed in splenocytes, T-cells, B-cells, bone marrow derived dendritic cells and macrophages (at protein level). Expressed in neurons. Highly expressed in endothelial cells and vascular smooth muscle cells, including blood vessels and mesenteric arteries. Expressed in bronchial and alveolar epithelial cells as well as vascular endothelial cells of lungs. Expressed in B-cells, bone marrow dendritic cells and macrophages (at protein level). As to expression, expressed in cardiomyocytes. In terms of tissue distribution, expressed at very low levels in neurons.

Its subcellular location is the endoplasmic reticulum membrane. The protein localises to the cell membrane. It is found in the synapse. The protein resides in the cell junction. In terms of biological role, required to induce the formation and stabilization of endoplasmic reticulum (ER) tubules. They regulate membrane morphogenesis in the ER by promoting tubular ER production. They influence nuclear envelope expansion, nuclear pore complex formation and proper localization of inner nuclear membrane proteins. However each isoform have specific functions mainly depending on their tissue expression specificities. Developmental neurite growth regulatory factor with a role as a negative regulator of axon-axon adhesion and growth, and as a facilitator of neurite branching. Regulates neurite fasciculation, branching and extension in the developing nervous system. Involved in down-regulation of growth, stabilization of wiring and restriction of plasticity in the adult CNS. Regulates the radial migration of cortical neurons via an RTN4R-LINGO1 containing receptor complex. Acts as a negative regulator of central nervous system angiogenesis. Inhibits spreading, migration and sprouting of primary brain microvascular endothelial cells (MVECs). Also induces the retraction of MVECs lamellipodia and filopodia in a ROCK pathway-dependent manner. Functionally, mainly function in endothelial cells and vascular smooth muscle cells, is also involved in immune system regulation. Modulator of vascular remodeling, promotes the migration of endothelial cells but inhibits the migration of vascular smooth muscle cells. Regulates endothelial sphingolipid biosynthesis with direct effects on vascular function and blood pressure. Inhibits serine palmitoyltransferase, SPTLC1, the rate-limiting enzyme of the novo sphingolipid biosynthetic pathway, thereby controlling production of endothelial sphingosine-1-phosphate (S1P). Required to promote macrophage homing and functions such as cytokine/chemokine gene expression involved in angiogenesis, arteriogenesis and tissue repair. Mediates ICAM1 induced transendothelial migration of leukocytes such as monocytes and neutrophils and acute inflammation. Necessary for immune responses triggered by nucleic acid sensing TLRs, such as TLR9, is required for proper TLR9 location to endolysosomes. Also involved in immune response to LPS. Plays a role in liver regeneration through the modulation of hepatocytes proliferation. Reduces the anti-apoptotic activity of Bcl-xl and Bcl-2. This is likely consecutive to their change in subcellular location, from the mitochondria to the endoplasmic reticulum, after binding and sequestration. With isoform C, inhibits BACE1 activity and amyloid precursor protein processing. Its function is as follows. Regulates cardiomyocyte apoptosis upon hypoxic conditions. With isoform B, inhibits BACE1 activity and amyloid precursor protein processing. This Mus musculus (Mouse) protein is Reticulon-4.